Reading from the N-terminus, the 222-residue chain is Putative N-acetylmannosamine-6-phosphate 2-epimerase (222 aa).

This sequence belongs to the NanE family.

The enzyme catalyses an N-acyl-D-glucosamine 6-phosphate = an N-acyl-D-mannosamine 6-phosphate. The protein operates within amino-sugar metabolism; N-acetylneuraminate degradation; D-fructose 6-phosphate from N-acetylneuraminate: step 3/5. Its function is as follows. Converts N-acetylmannosamine-6-phosphate (ManNAc-6-P) to N-acetylglucosamine-6-phosphate (GlcNAc-6-P). In Staphylococcus aureus (strain MSSA476), this protein is Putative N-acetylmannosamine-6-phosphate 2-epimerase.